A 599-amino-acid chain; its full sequence is Elongation factor 4 (599 aa).

Residues 2–184 (KNIRNFSIIA…RLVRDIPPPE (183 aa)) enclose the tr-type G domain. GTP contacts are provided by residues 14 to 19 (DHGKST) and 131 to 134 (NKID).

It belongs to the TRAFAC class translation factor GTPase superfamily. Classic translation factor GTPase family. LepA subfamily.

Its subcellular location is the cell inner membrane. The catalysed reaction is GTP + H2O = GDP + phosphate + H(+). Required for accurate and efficient protein synthesis under certain stress conditions. May act as a fidelity factor of the translation reaction, by catalyzing a one-codon backward translocation of tRNAs on improperly translocated ribosomes. Back-translocation proceeds from a post-translocation (POST) complex to a pre-translocation (PRE) complex, thus giving elongation factor G a second chance to translocate the tRNAs correctly. Binds to ribosomes in a GTP-dependent manner. This is Elongation factor 4 from Escherichia coli (strain SE11).